Consider the following 575-residue polypeptide: Serine/threonine-protein phosphatase 2A regulatory subunit B'' subunit beta (575 aa).

The interval 41–131 (APGRDQPTPG…SQSIPTFYFP (91 aa)) is disordered. In terms of domain architecture, EF-hand spans 388–423 (KTPTSIEYWFRCMDLDGDGALSMFELEYFYEEQCRR). Ca(2+) contacts are provided by Asp401, Asp403, Asp405, and Glu412.

In terms of assembly, PP2A consists of a common heterodimeric core enzyme, composed of a 36 kDa catalytic subunit (subunit C) and a 65 kDa constant regulatory subunit (PR65 or subunit A), that associates with a variety of regulatory subunits. Proteins that associate with the core dimer include three families of regulatory subunits B (the R2/B/PR55/B55, R3/B''/PR72/PR130/PR59 and R5/B'/B56 families), the 48 kDa variable regulatory subunit, viral proteins, and cell signaling molecules. Interacts with N-terminal region of CDC6. Interacts with NOD2.

It localises to the nucleus. Functionally, the B regulatory subunit might modulate substrate selectivity and catalytic activity, and might also direct the localization of the catalytic enzyme to a particular subcellular compartment. The chain is Serine/threonine-protein phosphatase 2A regulatory subunit B'' subunit beta (PPP2R3B) from Homo sapiens (Human).